Reading from the N-terminus, the 361-residue chain is MGNVLAASSPPAGPPPPPAPPLVGLPPPPPSPPGFTLPPLGGGLGAGAGTGRGSERTPGTAAASAGGTADDGACGCLPNPGTFEECHRKCKELFPIQMEGVKLTVNKGLSNHFQVNHTVALSTIGESNYHFGVTYVGTKQLSPTEAFPVLVGDMDNSGSLNAQVIHQLGPGLRSKMAIQTQQSKFVNWQVDGEYRGSDFTAAVTLGNPDVLVGSGILVAHYLQSITPCLALGGELVYHRRPGEEGAVMSLAGKYTLNNWLATVTLGQAGMHATYYHKASDQLQVGVEFEASTRMQDTSVSFGYQLDLPKANLLFKGSVDSNWIVGATLEKKLPPLPLTLALGAFLNHRKNKFQCGFGLTIG.

A compositionally biased stretch (low complexity) spans 1 to 10 (MGNVLAASSP). The segment at 1–71 (MGNVLAASSP…AASAGGTADD (71 aa)) is disordered. Over residues 11–36 (PAGPPPPPAPPLVGLPPPPPSPPGFT) the composition is skewed to pro residues. Residues 40–52 (LGGGLGAGAGTGR) show a composition bias toward gly residues. The segment covering 59 to 71 (GTAAASAGGTADD) has biased composition (low complexity).

Belongs to the Tom40 family. As to quaternary structure, forms part of the preprotein translocase complex of the outer mitochondrial membrane (TOM complex) which consists of at least 7 different proteins (TOMM5, TOMM6, TOMM7, TOMM20, TOMM22, TOMM40 and TOMM70). Interacts with mitochondrial targeting sequences. Interacts with TIMM29; linking the TIM22 complex to the TOM complex. Forms a complex with BCAP31 (via C-terminus) which mediates the translocation of components of the mitochondrial membrane respiratory chain NADH dehydrogenase (Complex I) from the cytosol to the mitochondria. Interacts (via N-terminus) with CYP1A1 (via mitochondrial targeting signal); this interaction is required for CYP1A1 translocation across the mitochondrial outer membrane.

Its subcellular location is the mitochondrion outer membrane. Its function is as follows. Channel-forming protein essential for import of protein precursors into mitochondria. Plays a role in the assembly of the mitochondrial membrane respiratory chain NADH dehydrogenase (Complex I) by forming a complex with BCAP31 and mediating the translocation of Complex I components from the cytosol to the mitochondria. This is Mitochondrial import receptor subunit TOM40 homolog from Bos taurus (Bovine).